The primary structure comprises 361 residues: Spermidine/putrescine import ATP-binding protein PotA (361 aa).

An ABC transporter domain is found at 4 to 234 (LELRDVTRRF…PANRFIADFI (231 aa)). 36–43 (GPSGCGKT) provides a ligand contact to ATP.

Belongs to the ABC transporter superfamily. Spermidine/putrescine importer (TC 3.A.1.11.1) family. As to quaternary structure, the complex is composed of two ATP-binding proteins (PotA), two transmembrane proteins (PotB and PotC) and a solute-binding protein (PotD).

The protein resides in the cell inner membrane. The catalysed reaction is ATP + H2O + polyamine-[polyamine-binding protein]Side 1 = ADP + phosphate + polyamineSide 2 + [polyamine-binding protein]Side 1.. Its function is as follows. Part of the ABC transporter complex PotABCD involved in spermidine/putrescine import. Responsible for energy coupling to the transport system. This is Spermidine/putrescine import ATP-binding protein PotA from Nitrosomonas europaea (strain ATCC 19718 / CIP 103999 / KCTC 2705 / NBRC 14298).